A 63-amino-acid chain; its full sequence is Large ribosomal subunit protein uL30 (63 aa).

It belongs to the universal ribosomal protein uL30 family. Part of the 50S ribosomal subunit.

The sequence is that of Large ribosomal subunit protein uL30 from Caulobacter sp. (strain K31).